Here is a 130-residue protein sequence, read N- to C-terminus: Cytochrome c oxidase subunit 13, mitochondrial (130 aa).

A mitochondrion-targeting transit peptide spans 1–31; that stretch reads MSMMNRNIGFLSRTLKTSVPKRAGLLSFRAY. At 32–61 the chain is on the mitochondrial matrix side; that stretch reads SNEAKVNWLEEVQAEEEHAKRSSEFWKKVT. The chain crosses the membrane as a helical span at residues 62–80; it reads YYIGGPALILASANAYYIY. Residues 81 to 130 are Mitochondrial intermembrane-facing; that stretch reads CKHQEHAKHVEDTDPGYSFENLRFKKYPWGDGSKTLFWNDKVNHLKKDDE.

The protein belongs to the cytochrome c oxidase subunit 6A family. Component of the cytochrome c oxidase (complex IV, CIV), a multisubunit enzyme composed of a catalytic core of 3 subunits and several supernumerary subunits. The complex exists as a monomer or a dimer and forms supercomplexes (SCs) in the inner mitochondrial membrane with ubiquinol-cytochrome c oxidoreductase (cytochrome b-c1 complex, complex III, CIII).

It localises to the mitochondrion inner membrane. The protein operates within energy metabolism; oxidative phosphorylation. Its function is as follows. Component of the cytochrome c oxidase, the last enzyme in the mitochondrial electron transport chain which drives oxidative phosphorylation. The respiratory chain contains 3 multisubunit complexes succinate dehydrogenase (complex II, CII), ubiquinol-cytochrome c oxidoreductase (cytochrome b-c1 complex, complex III, CIII) and cytochrome c oxidase (complex IV, CIV), that cooperate to transfer electrons derived from NADH and succinate to molecular oxygen, creating an electrochemical gradient over the inner membrane that drives transmembrane transport and the ATP synthase. Cytochrome c oxidase is the component of the respiratory chain that catalyzes the reduction of oxygen to water. Electrons originating from reduced cytochrome c in the intermembrane space (IMS) are transferred via the dinuclear copper A center (CU(A)) of subunit 2 and heme A of subunit 1 to the active site in subunit 1, a binuclear center (BNC) formed by heme A3 and copper B (CU(B)). The BNC reduces molecular oxygen to 2 water molecules unsing 4 electrons from cytochrome c in the IMS and 4 protons from the mitochondrial matrix. In Schizosaccharomyces pombe (strain 972 / ATCC 24843) (Fission yeast), this protein is Cytochrome c oxidase subunit 13, mitochondrial (cox13).